Reading from the N-terminus, the 192-residue chain is Immunity protein YqcF (192 aa).

In terms of assembly, probably interacts with cognate toxin YqcG but not with other non-cognate toxins. The interaction inhibits the toxic activity of YqcG.

The protein resides in the cytoplasm. In terms of biological role, immunity component of one of 6 LXG toxin-immunity modules in this strain. They promote kin selection, mediate competition in biofilms, and drive spatial segregation of different strains, indicating that LXG toxins may help avoid warfare between strains in biofilms. Mediates intercellular competition during biofilm formation; disruption of the operon disadvantages the bacteria, but overexpression of the cognate immunity protein restores growth in competition with wild-type. In situ neutralizes the toxic effect of cognate toxin YqcG. Neutralizes the toxic activity of cognate toxin YqcG upon expression in E.coli. Does not have immunity protein activity on other LXG toxins. This Bacillus subtilis (strain 168) protein is Immunity protein YqcF (yqcF).